The sequence spans 56 residues: Alpha-pompilidotoxin (56 aa).

Residues 1-22 (MFKQLILLALAAVFLLINISSA) form the signal peptide. Positions 23-42 (EPAAEPNANAEPLAEASAEP) are excised as a propeptide. Position 55 is a leucine amide (L55).

Expressed by the venom gland.

The protein localises to the secreted. Inhibits sodium channels (Nav) inactivation. Shows two types of inhibitory activities on channels. Inhibition of hNav1.6/SCN8A shows a large increase in the steady-state current component without any increase in the slow component, whereas inhibition of hNav1.1/SCN1A, hNav1.2/SCN2A, hNav1.3/SCN3A and hNav1.7/SCN9A shows a large increase in the slow component with only a small steady-state component. Is 5-fold less potent than beta-PMTX for inducing repetitive action potentials in lobster neuromuscular junctions. In Anoplius samariensis (Solitary wasp), this protein is Alpha-pompilidotoxin.